The primary structure comprises 222 residues: Eukaryotic translation initiation factor 3 subunit K (222 aa).

Positions 46-208 (YDLEANLAVL…KIKTKNITEK (163 aa)) constitute a PCI domain.

It belongs to the eIF-3 subunit K family. As to quaternary structure, component of the eukaryotic translation initiation factor 3 (eIF-3) complex. The eIF-3 complex interacts with pix.

Its subcellular location is the cytoplasm. In terms of biological role, component of the eukaryotic translation initiation factor 3 (eIF-3) complex, which is involved in protein synthesis of a specialized repertoire of mRNAs and, together with other initiation factors, stimulates binding of mRNA and methionyl-tRNAi to the 40S ribosome. The eIF-3 complex specifically targets and initiates translation of a subset of mRNAs involved in cell proliferation. In Drosophila virilis (Fruit fly), this protein is Eukaryotic translation initiation factor 3 subunit K.